The primary structure comprises 178 residues: Small ribosomal subunit protein uS4 (178 aa).

Residues 104-166 (RRLQTLVYRK…PNSPMALENH (63 aa)) form the S4 RNA-binding domain.

This sequence belongs to the universal ribosomal protein uS4 family. As to quaternary structure, part of the 30S ribosomal subunit. Contacts protein S5. The interaction surface between S4 and S5 is involved in control of translational fidelity.

One of the primary rRNA binding proteins, it binds directly to 16S rRNA where it nucleates assembly of the body of the 30S subunit. Functionally, with S5 and S12 plays an important role in translational accuracy. The protein is Small ribosomal subunit protein uS4 of Methanococcus vannielii (strain ATCC 35089 / DSM 1224 / JCM 13029 / OCM 148 / SB).